Here is a 54-residue protein sequence, read N- to C-terminus: Large ribosomal subunit protein bL33B (54 aa).

Belongs to the bacterial ribosomal protein bL33 family.

The polypeptide is Large ribosomal subunit protein bL33B (Mycolicibacterium vanbaalenii (strain DSM 7251 / JCM 13017 / BCRC 16820 / KCTC 9966 / NRRL B-24157 / PYR-1) (Mycobacterium vanbaalenii)).